Here is a 548-residue protein sequence, read N- to C-terminus: Poly(ADP-ribose) glycohydrolase 1 (548 aa).

Belongs to the poly(ADP-ribose) glycohydrolase family.

It carries out the reaction [(1''-&gt;2')-ADP-alpha-D-ribose](n) + H2O = [(1''-&gt;2')-ADP-alpha-D-ribose](n-1) + ADP-D-ribose. In terms of biological role, poly(ADP-ribose) synthesized after DNA damage is only present transiently and is rapidly degraded by poly(ADP-ribose) glycohydrolase. Involved in establishing period length of the circadian oscillator. May regulate post-translational poly(ADP-ribosyl)ation of an oscillator component. This is Poly(ADP-ribose) glycohydrolase 1 (PARG1) from Arabidopsis thaliana (Mouse-ear cress).